The sequence spans 101 residues: Putative fatty acid-binding protein 5-like protein 3 (101 aa).

It belongs to the calycin superfamily. Fatty-acid binding protein (FABP) family.

Its function is as follows. High specificity for fatty acids. The chain is Putative fatty acid-binding protein 5-like protein 3 (FABP5P3) from Homo sapiens (Human).